The primary structure comprises 143 residues: Transcriptional regulator MraZ (143 aa).

2 consecutive SpoVT-AbrB domains span residues 5 to 47 (EYQH…PQDE) and 76 to 119 (AAEL…STEK).

Belongs to the MraZ family. Forms oligomers.

The protein resides in the cytoplasm. It is found in the nucleoid. The protein is Transcriptional regulator MraZ of Syntrophomonas wolfei subsp. wolfei (strain DSM 2245B / Goettingen).